Here is a 116-residue protein sequence, read N- to C-terminus: Large ribosomal subunit protein bL19 (116 aa).

This sequence belongs to the bacterial ribosomal protein bL19 family.

In terms of biological role, this protein is located at the 30S-50S ribosomal subunit interface and may play a role in the structure and function of the aminoacyl-tRNA binding site. The polypeptide is Large ribosomal subunit protein bL19 (Staphylococcus saprophyticus subsp. saprophyticus (strain ATCC 15305 / DSM 20229 / NCIMB 8711 / NCTC 7292 / S-41)).